The following is a 1227-amino-acid chain: Methionine synthase (1227 aa).

The Hcy-binding domain occupies 2 to 325 (SSKVEQLRAQ…QHIAAMSRAV (324 aa)). Residues Cys247, Cys310, and Cys311 each contribute to the Zn(2+) site. Positions 356–617 (FVNVGERTNV…LPAELRDAVE (262 aa)) constitute a Pterin-binding domain. Residues 650-744 (QQAEWRSWEV…FIEASKEQGK (95 aa)) form the B12-binding N-terminal domain. Residues Glu694, 756–760 (GDVHD), His759, Ser804, Thr808, and Ala860 contribute to the methylcob(III)alamin site. Positions 746–881 (NGKMVIATVK…SDTQRDDFVA (136 aa)) constitute a B12-binding domain. Positions 897 to 1227 (KKPRTPPVTL…LAPNLGYDAD (331 aa)) constitute an AdoMet activation domain. S-adenosyl-L-methionine is bound by residues Asp946, Arg1134, and 1189-1190 (YY).

This sequence belongs to the vitamin-B12 dependent methionine synthase family. Methylcob(III)alamin is required as a cofactor. It depends on Zn(2+) as a cofactor.

It catalyses the reaction (6S)-5-methyl-5,6,7,8-tetrahydrofolate + L-homocysteine = (6S)-5,6,7,8-tetrahydrofolate + L-methionine. The protein operates within amino-acid biosynthesis; L-methionine biosynthesis via de novo pathway; L-methionine from L-homocysteine (MetH route): step 1/1. Catalyzes the transfer of a methyl group from methyl-cobalamin to homocysteine, yielding enzyme-bound cob(I)alamin and methionine. Subsequently, remethylates the cofactor using methyltetrahydrofolate. The chain is Methionine synthase (metH) from Escherichia coli (strain K12).